A 607-amino-acid polypeptide reads, in one-letter code: Frizzled and smoothened-like protein J (607 aa).

The first 26 residues, 1–26 (MVSNKNLLPIIYIFFIILYFGDVAKS), serve as a signal peptide directing secretion. Topologically, residues 27 to 247 (QYFPLDKGAT…QWRNIYRLSD (221 aa)) are extracellular. The FZ domain maps to 32–182 (DKGATCQKYR…LSYTNTCENT (151 aa)). Cystine bridges form between cysteine 37/cysteine 108, cysteine 50/cysteine 101, and cysteine 127/cysteine 179. N-linked (GlcNAc...) asparagine glycans are attached at residues asparagine 63, asparagine 133, asparagine 155, asparagine 164, asparagine 190, and asparagine 222. Residues 248–268 (VLSILSCILTLFLVITLGIIN) form a helical membrane-spanning segment. The Cytoplasmic segment spans residues 269–276 (PKVSRFDK). A helical membrane pass occupies residues 277–297 (INVMLLSSIFLQAFSGALMTF). An N-linked (GlcNAc...) asparagine glycan is attached at asparagine 298. The Extracellular portion of the chain corresponds to 298–330 (NGTENTLCPEDGRFASYIDRMCVATGFLLHGSS). The chain crosses the membrane as a helical span at residues 331 to 351 (LLVVQWWCVLSFEVWFTIFQV). Over 352–358 (GKKQKDR) the chain is Cytoplasmic. The helical transmembrane segment at 359–379 (FIYYLVASLIIAWIPPIVSIS) threads the bilayer. Topologically, residues 380-401 (KNEYSGGPANPFCWLTTFNYRR) are extracellular. The helical transmembrane segment at 402–422 (FAFWLPMGIFLCLGGVFLILL) threads the bilayer. The Cytoplasmic portion of the chain corresponds to 423–451 (MREIYVIVSGNVQSTKESRFKVLKMEAKP). Residues 452-472 (IISLIMYFSCLLYLFIYDQWI) form a helical membrane-spanning segment. Residues 473 to 508 (NNHMHVYTDSIPSYALCLLTSTSTNDCLLKAPDITG) are Extracellular-facing. The chain crosses the membrane as a helical span at residues 509–529 (LGYFIYSIRVFGVYAFIIYGI). The Cytoplasmic segment spans residues 530-607 (SKKTLQIWKY…VELDSNSDAL (78 aa)). Residues 532–537 (KTLQIW) carry the Lys-Thr-X-X-X-Trp motif, mediates interaction with the PDZ domain of Dvl family members motif. Residues 559 to 575 (TAKSSNSNNSSTTNNIS) show a composition bias toward low complexity. The disordered stretch occupies residues 559-607 (TAKSSNSNNSSTTNNISVKASSNMEYETRQENENGDSQSVELDSNSDAL). Positions 593 to 607 (GDSQSVELDSNSDAL) are enriched in polar residues.

This sequence belongs to the G-protein coupled receptor Fz/Smo family.

It localises to the membrane. This chain is Frizzled and smoothened-like protein J (fslJ-1), found in Dictyostelium discoideum (Social amoeba).